Reading from the N-terminus, the 114-residue chain is Class I hydrophobin 1 (114 aa).

A signal peptide spans 1 to 20 (MQFTKMSAFATLALATLAAA). Intrachain disulfides connect Cys33–Cys93, Cys40–Cys87, Cys41–Cys74, and Cys94–Cys107.

Belongs to the fungal hydrophobin family. Self-assembles to form functional amyloid fibrils called rodlets. Self-assembly into fibrillar rodlets occurs spontaneously at hydrophobic:hydrophilic interfaces and the rodlets further associate laterally to form amphipathic monolayers.

The protein resides in the secreted. It localises to the cell wall. In terms of biological role, aerial growth, conidiation, and dispersal of filamentous fungi in the environment rely upon a capability of their secreting small amphipathic proteins called hydrophobins (HPBs) with low sequence identity. Class I can self-assemble into an outermost layer of rodlet bundles on aerial cell surfaces, conferring cellular hydrophobicity that supports fungal growth, development and dispersal; whereas Class II form highly ordered films at water-air interfaces through intermolecular interactions but contribute nothing to the rodlet structure. Pnh1 is a class I hydrophobin that might be involved in the attachment of the hydrophilic wall of hyphae to the hydrophobic surface of wood under inorganic phosphate (Pi)-deficient conditions and enable the mycelium to degrade efficiently the components of wood and to acquire nutrients containing Pi. In Pholiota nameko, this protein is Class I hydrophobin 1.